The chain runs to 127 residues: Large-conductance mechanosensitive channel (127 aa).

A run of 3 helical transmembrane segments spans residues 9 to 29 (EFAM…GVAF), 32 to 52 (IVTA…LGGV), and 75 to 95 (VIDF…INLL).

Belongs to the MscL family. As to quaternary structure, homopentamer.

The protein resides in the cell inner membrane. Its function is as follows. Channel that opens in response to stretch forces in the membrane lipid bilayer. May participate in the regulation of osmotic pressure changes within the cell. The protein is Large-conductance mechanosensitive channel of Legionella pneumophila (strain Lens).